The primary structure comprises 199 residues: Probable GTP-binding protein EngB (199 aa).

The 176-residue stretch at 21–196 folds into the EngB-type G domain; that stretch reads TKPEYAFIGR…LTYIDEINKQ (176 aa). GTP contacts are provided by residues 29–36, 56–60, 74–77, 141–144, and 175–177; these read GRSNVGKS, GKTQL, DLPG, TKID, and TSS. S36 and T58 together coordinate Mg(2+).

Belongs to the TRAFAC class TrmE-Era-EngA-EngB-Septin-like GTPase superfamily. EngB GTPase family. The cofactor is Mg(2+).

Functionally, necessary for normal cell division and for the maintenance of normal septation. The polypeptide is Probable GTP-binding protein EngB (Cytophaga hutchinsonii (strain ATCC 33406 / DSM 1761 / CIP 103989 / NBRC 15051 / NCIMB 9469 / D465)).